The chain runs to 387 residues: Putative protein FAM157C (387 aa).

3 disordered regions span residues M1 to K21, T182 to P226, and R329 to G353.

Belongs to the FAM157 family.

The polypeptide is Putative protein FAM157C (FAM157C) (Homo sapiens (Human)).